The following is a 103-amino-acid chain: Small ribosomal subunit protein uS10c (103 aa).

The protein belongs to the universal ribosomal protein uS10 family. In terms of assembly, part of the 30S ribosomal subunit.

Its subcellular location is the plastid. It localises to the chloroplast. Involved in the binding of tRNA to the ribosomes. This is Small ribosomal subunit protein uS10c from Trieres chinensis (Marine centric diatom).